The chain runs to 333 residues: DNA-directed RNA polymerase subunit alpha (333 aa).

Positions 1–233 are alpha N-terminal domain (alpha-NTD); that stretch reads MVREKVRVST…DLFIPFLHAE (233 aa). Positions 266 to 333 are alpha C-terminal domain (alpha-CTD); sequence KKEIAFKSIF…DILEIEKHFP (68 aa).

The protein belongs to the RNA polymerase alpha chain family. In terms of assembly, in plastids the minimal PEP RNA polymerase catalytic core is composed of four subunits: alpha, beta, beta', and beta''. When a (nuclear-encoded) sigma factor is associated with the core the holoenzyme is formed, which can initiate transcription.

Its subcellular location is the plastid. The protein localises to the chloroplast. It catalyses the reaction RNA(n) + a ribonucleoside 5'-triphosphate = RNA(n+1) + diphosphate. DNA-dependent RNA polymerase catalyzes the transcription of DNA into RNA using the four ribonucleoside triphosphates as substrates. The sequence is that of DNA-directed RNA polymerase subunit alpha from Lotus japonicus (Lotus corniculatus var. japonicus).